The following is a 365-amino-acid chain: MFEVNPVLNKLKELSERTELLRGYFDYDAKKERLEEVNAELEQPDVWNEPERAQALGKERVSLENVVGTIDVLTQGAEDVEMLVSLAVEGEDEDTFNEAVAEADVLETKLVDLEFRRMFSGQHDGSDCYIDIQSGSGGTEAQDWANMVLRMYLRWGDAHGYKPELIELSDGDVAGIKSATVKFTGEYAFGWLRTETGVHRLVRKSPFDSGGRRHTSFCSVFVYPEIDDDIDIEINPADLRIDVYRASGAGGQHVNRTESAVRITHIPTGVVVQCQNDRSQHKNKDQCMKQLKAKLYELEIQKQNAEKQALEETKSDIGWGSQIRSYVLDDARIKDLRTGVETRNTQAVLDGDLDKFIEASLKSGL.

At Q252 the chain carries N5-methylglutamine.

The protein belongs to the prokaryotic/mitochondrial release factor family. Methylated by PrmC. Methylation increases the termination efficiency of RF2.

It localises to the cytoplasm. Functionally, peptide chain release factor 2 directs the termination of translation in response to the peptide chain termination codons UGA and UAA. The polypeptide is Peptide chain release factor 2 (Aeromonas salmonicida (strain A449)).